The chain runs to 219 residues: Probable glutathione S-transferase MSR-1 (219 aa).

Positions 4-83 (NNVVLLDFSG…YIDEVWHEKC (80 aa)) constitute a GST N-terminal domain. Glutathione-binding positions include S14, K41, I55, and 67–68 (ES). One can recognise a GST C-terminal domain in the interval 89 to 208 (DPYQRSQARF…LPHPHKIYDF (120 aa)).

This sequence belongs to the GST superfamily. HSP26 family.

It carries out the reaction RX + glutathione = an S-substituted glutathione + a halide anion + H(+). May play an important role in hormonal and growth regulatory responses. This Nicotiana plumbaginifolia (Leadwort-leaved tobacco) protein is Probable glutathione S-transferase MSR-1 (MSR-1).